The sequence spans 143 residues: Transcriptional regulator MraZ (143 aa).

SpoVT-AbrB domains follow at residues 5 to 47 (EYEH…TLEE) and 76 to 119 (AIEV…DRET).

Belongs to the MraZ family. In terms of assembly, forms oligomers.

It is found in the cytoplasm. Its subcellular location is the nucleoid. In Staphylococcus haemolyticus (strain JCSC1435), this protein is Transcriptional regulator MraZ.